Consider the following 242-residue polypeptide: Uridylate kinase (242 aa).

ATP is bound at residue 15–18 (KLSG). Residues 23 to 28 (GDEGFG) are involved in allosteric activation by GTP. Gly-57 contributes to the UMP binding site. ATP is bound by residues Gly-58 and Arg-62. Residues Asp-77 and 138–145 (TGNPFCTT) each bind UMP. Residues Thr-165, Tyr-171, and Asp-174 each coordinate ATP.

It belongs to the UMP kinase family. As to quaternary structure, homohexamer.

It localises to the cytoplasm. It catalyses the reaction UMP + ATP = UDP + ADP. It participates in pyrimidine metabolism; CTP biosynthesis via de novo pathway; UDP from UMP (UMPK route): step 1/1. With respect to regulation, allosterically activated by GTP. Inhibited by UTP. Functionally, catalyzes the reversible phosphorylation of UMP to UDP. This is Uridylate kinase from Shewanella sp. (strain ANA-3).